The primary structure comprises 318 residues: Sol locus transcriptional repressor (318 aa).

TPR repeat units lie at residues 65–98 (ANAY…RPKT), 99–132 (INDV…QPNV), 133–166 (GISY…GSTN), and 167–199 (SVYR…EPEK).

Functionally, transcriptional repressor of the sol locus (adhE/aad, ctfA, ctfB and adc) genes for butanol and acetone formation. The protein is Sol locus transcriptional repressor (solR) of Clostridium acetobutylicum (strain ATCC 824 / DSM 792 / JCM 1419 / IAM 19013 / LMG 5710 / NBRC 13948 / NRRL B-527 / VKM B-1787 / 2291 / W).